A 353-amino-acid chain; its full sequence is MTACSTTPTTSATSAQPAAGSPLQWHARPSKSDTLPFEGAWSVQAIQELLDKPFMDLMFQAQSVHREHWPAGDIELATLLSVKTGGCPENCGYCPQAAEFDTGVKAEKLMSVDEVTRAAQAAKDAGATRFCMGAAWRAPKDRDIEKMNELIGAVKGLGMQTCATLGMLQPHQAQSLREAGLDYYNHNLDTAPEYYQDVVSTRQYQDRLDTLKAVRGAGISVCCGGIIGMGEAPVHRAGLIAQLANLNPHPESVPINSLVRVPGTPLADSEPVDPLDFVRVIAVARITMPTARVRLSAGRQQLGDAVQALCFMAGANSIFYGDKLLVTGNPDVEADTTLLRKLGLSGTRTSVQE.

A compositionally biased stretch (low complexity) spans 1–22 (MTACSTTPTTSATSAQPAAGSP). The interval 1-30 (MTACSTTPTTSATSAQPAAGSPLQWHARPS) is disordered. The Radical SAM core domain maps to 72-299 (GDIELATLLS…TARVRLSAGR (228 aa)). [4Fe-4S] cluster contacts are provided by C87, C91, and C94. Residues C131, C162, C222, and R294 each contribute to the [2Fe-2S] cluster site.

It belongs to the radical SAM superfamily. Biotin synthase family. As to quaternary structure, homodimer. The cofactor is [4Fe-4S] cluster. [2Fe-2S] cluster is required as a cofactor.

The enzyme catalyses (4R,5S)-dethiobiotin + (sulfur carrier)-SH + 2 reduced [2Fe-2S]-[ferredoxin] + 2 S-adenosyl-L-methionine = (sulfur carrier)-H + biotin + 2 5'-deoxyadenosine + 2 L-methionine + 2 oxidized [2Fe-2S]-[ferredoxin]. The protein operates within cofactor biosynthesis; biotin biosynthesis; biotin from 7,8-diaminononanoate: step 2/2. Catalyzes the conversion of dethiobiotin (DTB) to biotin by the insertion of a sulfur atom into dethiobiotin via a radical-based mechanism. In Delftia acidovorans (strain DSM 14801 / SPH-1), this protein is Biotin synthase.